Here is a 260-residue protein sequence, read N- to C-terminus: Pyridoxine 5'-phosphate synthase (260 aa).

Residues Asn10 and Arg21 each contribute to the 3-amino-2-oxopropyl phosphate site. The active-site Proton acceptor is the His46. Arg48 and His53 together coordinate 1-deoxy-D-xylulose 5-phosphate. The active-site Proton acceptor is the Glu76. Residue Thr113 coordinates 1-deoxy-D-xylulose 5-phosphate. His204 functions as the Proton donor in the catalytic mechanism. Residues Asp205 and 227 to 228 contribute to the 3-amino-2-oxopropyl phosphate site; that span reads GH.

The protein belongs to the PNP synthase family. In terms of assembly, homooctamer; tetramer of dimers.

The protein resides in the cytoplasm. The enzyme catalyses 3-amino-2-oxopropyl phosphate + 1-deoxy-D-xylulose 5-phosphate = pyridoxine 5'-phosphate + phosphate + 2 H2O + H(+). Its pathway is cofactor biosynthesis; pyridoxine 5'-phosphate biosynthesis; pyridoxine 5'-phosphate from D-erythrose 4-phosphate: step 5/5. Its function is as follows. Catalyzes the complicated ring closure reaction between the two acyclic compounds 1-deoxy-D-xylulose-5-phosphate (DXP) and 3-amino-2-oxopropyl phosphate (1-amino-acetone-3-phosphate or AAP) to form pyridoxine 5'-phosphate (PNP) and inorganic phosphate. This Xylella fastidiosa (strain 9a5c) protein is Pyridoxine 5'-phosphate synthase.